We begin with the raw amino-acid sequence, 392 residues long: Phosphoglycerate kinase (392 aa).

Substrate is bound by residues 21–23, arginine 36, 59–62, arginine 114, and arginine 147; these read DMN and HLGR. ATP is bound by residues lysine 198, glutamate 320, and 346 to 349; that span reads GGDT.

It belongs to the phosphoglycerate kinase family. As to quaternary structure, monomer.

The protein localises to the cytoplasm. The catalysed reaction is (2R)-3-phosphoglycerate + ATP = (2R)-3-phospho-glyceroyl phosphate + ADP. It functions in the pathway carbohydrate degradation; glycolysis; pyruvate from D-glyceraldehyde 3-phosphate: step 2/5. In Neisseria meningitidis serogroup C / serotype 2a (strain ATCC 700532 / DSM 15464 / FAM18), this protein is Phosphoglycerate kinase.